Consider the following 740-residue polypeptide: MEQTYEYAWIIPFIPLPVPMLIGAGLILFPTATKSFRRMWAFQSVLLLSIVMIFSIYLSIQQINSSSVYQYVWSWIINNDFSLDFGYLIDPLTSIMSILITTVGIMVLIYSDNYMAHDQGYLRFFAYMSFFSTSMLGLVTSSNLIQIYIFWELVGLCSYLLIGFWFTRPVAANACQKAFVTNRVGDFGLLLGILGFYWITGSFEFRDLFEIFNNLIYNNEVNFLFVTLCAVLLFAGAVSKSAQFPLHVWLPDAMEGPTPISALIHAATMVAAGIFLVARLLPLFRVIPYIMYLISVIGIITVLLGATLALAQKDIKRGLAYSTMSQLGYMMLALGMGSYRSALFHLITHAYSKALLFLGSGSIIHSMETIVGYSPAKSQNMGLMGGLRKHVPITKITFLLGTLSLCGIPPLACFWSKDEILNDSWLYSPIFAIIAWATAGLTAFYMFRIYLLTFEGHLNVHFQNYGGKHKTPFYSISLWGKNGVKKNSCLLTMNNNESTYFLSKTKYPIDKNGRKMTRPFMTIAHFEHKAVSSYPYESDNTMLFPIFVLGLFTLFVGAIGIPFNQEGVNLDILSKWLAPSINLLHPKSNNSQDWNEFLKDAVVSVSIAYFGIFIASFLYKPVYSSLKNLEFINSFVKKGPKRILWDKIINGIYDWSYNRAYIDAFYTRFFVGGIRGLAEFTHFFDRRVIDGMTNGVGVISFIVGEGIKYIGGGRISSYLFLYLAYVSVFLLVYYLLFSTF.

The next 16 helical transmembrane spans lie at 9–29 (WIIP…LILF), 40–60 (WAFQ…YLSI), 89–109 (IDPL…MVLI), 125–145 (FAYM…SNLI), 147–167 (IYIF…FWFT), 185–205 (GDFG…SFEF), 219–239 (NEVN…GAVS), 258–278 (TPIS…FLVA), 286–306 (VIPY…LLGA), 327–347 (LGYM…FHLI), 354–374 (ALLF…VGYS), 396–416 (ITFL…CFWS), 425–445 (WLYS…TAFY), 543–563 (LFPI…GIPF), 602–622 (VVSV…YKPV), and 717–737 (SYLF…YLLF).

The protein belongs to the complex I subunit 5 family. As to quaternary structure, NDH is composed of at least 16 different subunits, 5 of which are encoded in the nucleus.

Its subcellular location is the plastid. The protein resides in the chloroplast thylakoid membrane. It catalyses the reaction a plastoquinone + NADH + (n+1) H(+)(in) = a plastoquinol + NAD(+) + n H(+)(out). The enzyme catalyses a plastoquinone + NADPH + (n+1) H(+)(in) = a plastoquinol + NADP(+) + n H(+)(out). NDH shuttles electrons from NAD(P)H:plastoquinone, via FMN and iron-sulfur (Fe-S) centers, to quinones in the photosynthetic chain and possibly in a chloroplast respiratory chain. The immediate electron acceptor for the enzyme in this species is believed to be plastoquinone. Couples the redox reaction to proton translocation, and thus conserves the redox energy in a proton gradient. The polypeptide is NAD(P)H-quinone oxidoreductase subunit 5, chloroplastic (ndhF) (Solanum bulbocastanum (Wild potato)).